Consider the following 101-residue polypeptide: MANITVTFTITEFCLHTGVTEEELNEIVGLGVIEPYEDDNANWQFDDRAASVVQRALRLREELALDWPGIAVALTLLEENSRLREENRQLLLRLSRFISHP.

It belongs to the CbpM family.

Interacts with CbpA and inhibits both the DnaJ-like co-chaperone activity and the DNA binding activity of CbpA. Together with CbpA, modulates the activity of the DnaK chaperone system. Does not inhibit the co-chaperone activity of DnaJ. This chain is Chaperone modulatory protein CbpM, found in Salmonella arizonae (strain ATCC BAA-731 / CDC346-86 / RSK2980).